The primary structure comprises 412 residues: MRPVPGPSVFWGAGSRLPAPLVARAHRLLRTRRANPARGASRITKDMNYWDYIHVEELLALQGGFDDDEQKVGNDEALFIVVHQIYELWFKLILRELTSARELFRQNPVPDQKLASAARSFRRVVTIFEQAIEHFRVMETLTTRDYLDFRDRLIPASGFQSAQLREIELLLGLDDALRIPLGREGSYKEALKTADGAPSAATRRVEARLASGPSLKHFLDEWLSRTPIDGSSEPEGVVGFLRSYTRSMRQENERRVQMAIDKALTPPDVERLRARYEAESAAAEAFLLAEDDPAADAATREKRRAVRAAIVFIESYRELPRLAWPREVLDRILEMEQAMLIWRQRHARMVERVIGRRTGTGGSAGVDYLDQTALRYRVFGDLWTVRSLLLRKPSVPEIEHASDYGFRVEDSP.

Substrate is bound by residues 79 to 83 (FIVVH), Tyr146, and Arg150. His346 provides a ligand contact to heme. Thr360 contributes to the substrate binding site.

Belongs to the tryptophan 2,3-dioxygenase family. As to quaternary structure, homotetramer. It depends on heme as a cofactor.

It catalyses the reaction L-tryptophan + O2 = N-formyl-L-kynurenine. It functions in the pathway amino-acid degradation; L-tryptophan degradation via kynurenine pathway; L-kynurenine from L-tryptophan: step 1/2. Functionally, heme-dependent dioxygenase that catalyzes the oxidative cleavage of the L-tryptophan (L-Trp) pyrrole ring and converts L-tryptophan to N-formyl-L-kynurenine. Catalyzes the oxidative cleavage of the indole moiety. The chain is Tryptophan 2,3-dioxygenase from Sorangium cellulosum (strain So ce56) (Polyangium cellulosum (strain So ce56)).